Consider the following 519-residue polypeptide: Sorting nexin-2 (519 aa).

The segment at 1–104 (MAAEREPPPL…EPSPAVTPVT (104 aa)) is disordered. 2 stretches are compositionally biased toward low complexity: residues 27-50 (LFTSTVSTLESSPSSPEPASLPAE) and 93-104 (SSEPSPAVTPVT). Serine 97 bears the Phosphoserine mark. Phosphothreonine is present on residues threonine 101 and threonine 104. Serine 117 and serine 119 each carry phosphoserine. One can recognise a PX domain in the interval 140-269 (FDIEIGVSDP…QFLESSELPR (130 aa)). Residues arginine 183, serine 185, lysine 211, and arginine 235 each coordinate a 1,2-diacyl-sn-glycero-3-phospho-(1D-myo-inositol-3-phosphate). At serine 185 the chain carries Phosphoserine. The segment at 260–519 (QFLESSELPR…AFLPEAKAIA (260 aa)) is interaction with RhoG. Residue serine 277 is modified to Phosphoserine. The segment at 278 to 295 (GAGILRMVNKAADAVNKM) is membrane-binding amphipathic helix. The 221-residue stretch at 299-519 (MNESDAWFEE…AFLPEAKAIA (221 aa)) folds into the BAR domain. Lysine 469 bears the N6-acetyllysine mark.

The protein belongs to the sorting nexin family. As to quaternary structure, predominantly forms heterodimers with BAR domain-containing sorting nexins SNX5, SNX6 and SNX32; can self-associate to form homodimers. The heterodimers are proposed to self-assemble into helical arrays on the membrane to stabilize and expand local membrane curvature underlying endosomal tubule formation. Thought to be a component of the originally described retromer complex (also called SNX-BAR retromer) which is a pentamer containing the heterotrimeric retromer cargo-selective complex (CSC), also described as vacuolar protein sorting subcomplex (VPS), and a heterodimeric membrane-deforming subcomplex formed between SNX1 or SNX2 and SNX5 or SNX6 (also called SNX-BAR subcomplex); the respective CSC and SNX-BAR subcomplexes associate with low affinity. Interacts with SNX5, SNX6, SNX32, VPS26A, VPS29, VPS35, FNBP1, KALRN, RHOG (GDP-bound form).

Its subcellular location is the early endosome membrane. The protein resides in the cell projection. The protein localises to the lamellipodium. Involved in several stages of intracellular trafficking. Interacts with membranes containing phosphatidylinositol 3-phosphate (PtdIns(3P)) or phosphatidylinositol 3,5-bisphosphate (PtdIns(3,5)P2). Acts in part as component of the retromer membrane-deforming SNX-BAR subcomplex. The SNX-BAR retromer mediates retrograde transport of cargo proteins from endosomes to the trans-Golgi network (TGN) and is involved in endosome-to-plasma membrane transport for cargo protein recycling. The SNX-BAR subcomplex functions to deform the donor membrane into a tubular profile called endosome-to-TGN transport carrier (ETC). Can sense membrane curvature and has in vitro vesicle-to-membrane remodeling activity. Required for retrograde endosome-to-TGN transport of TGN38. Promotes KALRN- and RHOG-dependent but retromer-independent membrane remodeling such as lamellipodium formation; the function is dependent on GEF activity of KALRN. The polypeptide is Sorting nexin-2 (SNX2) (Homo sapiens (Human)).